We begin with the raw amino-acid sequence, 255 residues long: tRNA pseudouridine synthase A (255 aa).

Aspartate 56 functions as the Nucleophile in the catalytic mechanism. Residue tyrosine 114 coordinates substrate.

The protein belongs to the tRNA pseudouridine synthase TruA family. As to quaternary structure, homodimer.

It carries out the reaction uridine(38/39/40) in tRNA = pseudouridine(38/39/40) in tRNA. Formation of pseudouridine at positions 38, 39 and 40 in the anticodon stem and loop of transfer RNAs. The chain is tRNA pseudouridine synthase A from Methylacidiphilum infernorum (isolate V4) (Methylokorus infernorum (strain V4)).